A 91-amino-acid chain; its full sequence is Putative 26S proteasome complex subunit sem-1 (91 aa).

The disordered stretch occupies residues 1-73; that stretch reads MASTQPKNDA…SWDDDDTSDD (73 aa). Over residues 8 to 28 the composition is skewed to basic and acidic residues; the sequence is NDAKSTEPKPEQPVTEKKTAV. Composition is skewed to acidic residues over residues 29–48 and 63–72; these read LEED…AEDT and ESWDDDDTSD.

The protein belongs to the DSS1/SEM1 family. Part of the 26S proteasome.

Its function is as follows. Subunit of the 26S proteasome which plays a role in ubiquitin-dependent proteolysis. The polypeptide is Putative 26S proteasome complex subunit sem-1 (sem-1) (Neurospora crassa (strain ATCC 24698 / 74-OR23-1A / CBS 708.71 / DSM 1257 / FGSC 987)).